A 294-amino-acid chain; its full sequence is Homeobox protein HD1 (294 aa).

Residues 197–217 form the ELK domain; that stretch reads ELKLELKQGFKSRIEDVREEI. Residues 218 to 281 constitute a DNA-binding region (homeobox; TALE-type); it reads MRKRRAGKLP…NQRKRNWHNN (64 aa).

This sequence belongs to the TALE/KNOX homeobox family. In roots, stems and cotyledons of one-week old seedlings. In mature plants, in young leaves from first level below flowers as well as in flower buds and open flowers.

Its subcellular location is the nucleus. In terms of biological role, possible developmental regulator. This chain is Homeobox protein HD1 (HD1), found in Brassica napus (Rape).